The primary structure comprises 308 residues: Very-long-chain enoyl-CoA reductase (308 aa).

Topologically, residues 1 to 86 (MKHYEVEIRD…YFRDLGAQIS (86 aa)) are cytoplasmic. Lys-22 carries the post-translational modification N6-acetyllysine. Position 58 is a phosphoserine (Ser-58). At Lys-60 the chain carries N6-acetyllysine. A helical membrane pass occupies residues 87-106 (WVTVFLTEYAGPLFIYLLFY). The Lumenal segment spans residues 107 to 124 (FRVPFIYGRKYDFTSSRH). The chain crosses the membrane as a helical span at residues 125–147 (TVVHLACMCHSFHYIKRLLETLF). Over 148–158 (VHRFSHGTMPL) the chain is Cytoplasmic. A helical membrane pass occupies residues 159–180 (RNIFKNCTYYWGFAAWMAYYIN). Residues 181–189 (HPLYTPPTY) lie on the Lumenal side of the membrane. Residues 190 to 216 (GVQQVKLALAVFVICQLGNFSIHMALR) traverse the membrane as a helical segment. Residues 217 to 245 (DLRPAGSKTRKIPYPTKNPFTWLFLLVSC) are Cytoplasmic-facing. The chain crosses the membrane as a helical span at residues 246–262 (PNYTYEVGSWIGFAILT). Residues 263-264 (QC) are Lumenal-facing. Residues 265–292 (VPVALFSLVGFTQMTIWAKGKHRSYLKE) traverse the membrane as a helical segment. Topologically, residues 293–308 (FRDYPPLRMPIIPFLL) are cytoplasmic.

Belongs to the steroid 5-alpha reductase family. In terms of assembly, interacts with ELOVL1 and LASS2. Post-translationally, glycosylated.

It localises to the endoplasmic reticulum membrane. The catalysed reaction is a very-long-chain 2,3-saturated fatty acyl-CoA + NADP(+) = a very-long-chain (2E)-enoyl-CoA + NADPH + H(+). The enzyme catalyses octadecanoyl-CoA + NADP(+) = (2E)-octadecenoyl-CoA + NADPH + H(+). It carries out the reaction (2E,7Z,10Z,13Z,16Z)-docosapentaenoyl-CoA + NADPH + H(+) = (7Z,10Z,13Z,16Z)-docosatetraenoyl-CoA + NADP(+). It catalyses the reaction (2E,7Z,10Z,13Z,16Z,19Z)-docosahexaenoyl-CoA + NADPH + H(+) = (7Z,10Z,13Z,16Z,19Z)-docosapentaenoyl-CoA + NADP(+). The catalysed reaction is (2E,8Z,11Z,14Z)-eicosatetraenoyl-CoA + NADPH + H(+) = (8Z,11Z,14Z)-eicosatrienoyl-CoA + NADP(+). The enzyme catalyses (2E)-hexadecenoyl-CoA + NADPH + H(+) = hexadecanoyl-CoA + NADP(+). It participates in lipid metabolism; fatty acid biosynthesis. It functions in the pathway lipid metabolism; sphingolipid metabolism. Involved in both the production of very long-chain fatty acids for sphingolipid synthesis and the degradation of the sphingosine moiety in sphingolipids through the sphingosine 1-phosphate metabolic pathway. Catalyzes the last of the four reactions of the long-chain fatty acids elongation cycle. This endoplasmic reticulum-bound enzymatic process, allows the addition of 2 carbons to the chain of long- and very long-chain fatty acids/VLCFAs per cycle. This enzyme reduces the trans-2,3-enoyl-CoA fatty acid intermediate to an acyl-CoA that can be further elongated by entering a new cycle of elongation. Thereby, it participates in the production of VLCFAs of different chain lengths that are involved in multiple biological processes as precursors of membrane lipids and lipid mediators. Catalyzes the saturation step of the sphingosine 1-phosphate metabolic pathway, the conversion of trans-2-hexadecenoyl-CoA to palmitoyl-CoA. This chain is Very-long-chain enoyl-CoA reductase (Tecr), found in Mus musculus (Mouse).